The sequence spans 274 residues: TATA box-binding protein-associated factor RNA polymerase I subunit D (274 aa).

Polar residues predominate over residues 1–19 (MDSLNYTTACDSAVETENQ). Disordered stretches follow at residues 1–45 (MDSL…RQRN) and 84–111 (NKKRKRKKKKYKPTGRSVGRPKGRRTTR). Ser-20 carries the phosphoserine modification. The span at 84 to 110 (NKKRKRKKKKYKPTGRSVGRPKGRRTT) shows a compositional bias: basic residues. A phosphoserine mark is found at Ser-132 and Ser-229.

As to quaternary structure, component of the transcription factor SL1/TIF-IB complex, composed of TBP and at least TAF1A, TAF1B, TAF1C and TAF1D. Interacts with UBTF.

The protein resides in the nucleus. Component of the transcription factor SL1/TIF-IB complex, which is involved in the assembly of the PIC (preinitiation complex) during RNA polymerase I-dependent transcription. The rate of PIC formation probably is primarily dependent on the rate of association of SL1/TIF-IB with the rDNA promoter. SL1/TIF-IB is involved in stabilization of nucleolar transcription factor 1/UBTF on rDNA. Formation of SL1/TIF-IB excludes the association of TBP with TFIID subunits. The polypeptide is TATA box-binding protein-associated factor RNA polymerase I subunit D (TAF1D) (Bos taurus (Bovine)).